The chain runs to 969 residues: ATP-dependent RNA helicase DBP10 (969 aa).

Disordered stretches follow at residues 1 to 73 and 78 to 97; these read MVKN…KVED and SLEL…DDDD. Residues 32–59 show a composition bias toward acidic residues; that stretch reads SDSESDDSSDGSDEEVQDVIEYSSDEEE. Positions 115–143 match the Q motif motif; it reads GSFASFGLSKLILVNISKRGFRQPTPIQR. One can recognise a Helicase ATP-binding domain in the interval 146–318; that stretch reads IPLILQNRDI…KAGLVNPVLV (173 aa). Position 159-166 (159-166) interacts with ATP; the sequence is ARTGSGKT. The DEAD box signature appears at 266–269; that stretch reads DEAD. Disordered regions lie at residues 366–402, 860–924, and 946–969; these read QLND…PKAN, KTGA…LERG, and IRKD…KRKF. The span at 374 to 383 shows a compositional bias: acidic residues; that stretch reads DSDESAEEDE. A compositionally biased stretch (basic residues) spans 386 to 398; it reads KRRKRKSFNRKAM. The 148-residue stretch at 396–543 folds into the Helicase C-terminal domain; the sequence is KAMPKANELP…PMYEALERLS (148 aa). Residues 897 to 921 are compositionally biased toward basic and acidic residues; that stretch reads EKAPRLPDKKRDDYHKQKKKVESAL. Basic residues predominate over residues 958-969; it reads AKNARPSKKRKF.

The protein belongs to the DEAD box helicase family. DDX54/DBP10 subfamily.

Its subcellular location is the nucleus. It is found in the nucleolus. It catalyses the reaction ATP + H2O = ADP + phosphate + H(+). Functionally, ATP-binding RNA helicase involved in the biogenesis of 60S ribosomal subunits and is required for the normal formation of 25S and 5.8S rRNAs. This Candida glabrata (strain ATCC 2001 / BCRC 20586 / JCM 3761 / NBRC 0622 / NRRL Y-65 / CBS 138) (Yeast) protein is ATP-dependent RNA helicase DBP10 (DBP10).